The chain runs to 652 residues: MTRDIVIIGGGVIGLAIAVELKLRGTKVTVLCRDFPAAAAHAAAGMLAPDAEEITDEAMKSLCWRSRSLYPEWTSKLEDLTGLNTGYWPCGILAPVYEGQESKGVRIQENKGESPAYWLEKAVIHQYQPGLGEDVVGGWWYPEDAQVNNQALARVLWAAAESLGVELNDGITVEGLLQQQGQVVGVQTNTGIIQAEHYVLATGAWANELLPLPVTPRKGQMLRVRVPESVPELPLKRVLFGENIYIVPRRDRSIIIGATSEDVGFTPHNTPAGIQTLLQGAIRLYPQLQDYPIQEFWWGFRPATPDELPILGTSHCANLTLATGHYRNGILLAPITAALIADFIVEQKSDPLLSHFHYSRFQKQASTTPMFTHSANFSNGHAKNPPLPTLDSSLIIAGKSFHSRLMTGTGKYRSIEEMQQSVVASGCEIVTVAVRRVQTKAPGHEGLAEALDWSRIWMLPNTAGCQTAEEAIRVARLGREMAKLLGQEDNNFVKLEVIPDPKYLLPDPIGTLQAAEQLVKEGFAVLPYINADPMLAKRLEDVGCATVMPLASPIGSGQGLKTTANIQIIIENAKIPVVVDAGIGAPSEASQAMELGADALLINSAIALAQNPAAMAQAMNLATVAGRLAYLAGRMPIKTYASASSPVTGTIS.

Residues 1-366 (MTRDIVIIGG…HYSRFQKQAS (366 aa)) form a thiO region. FAD-binding positions include 5 to 19 (IVII…AIAV) and 44 to 46 (AGM). Position 52 (Glu52) interacts with glycine. Residue Val173 participates in FAD binding. Positions 301 and 327 each coordinate glycine. 325 to 331 (HYRNGIL) contacts FAD. The segment at 393-652 (SLIIAGKSFH…ASSPVTGTIS (260 aa)) is thiG. Lys494 functions as the Schiff-base intermediate with DXP in the catalytic mechanism. Residues Gly555, 581 to 582 (AG), and 603 to 604 (NS) each bind 1-deoxy-D-xylulose 5-phosphate.

It in the N-terminal section; belongs to the DAO family. ThiO subfamily. The protein in the C-terminal section; belongs to the ThiG family. As to quaternary structure, interacts with ThiH and ThiS. FAD is required as a cofactor.

It localises to the cytoplasm. It carries out the reaction glycine + O2 + H2O = glyoxylate + H2O2 + NH4(+). The enzyme catalyses [ThiS sulfur-carrier protein]-C-terminal-Gly-aminoethanethioate + 2-iminoacetate + 1-deoxy-D-xylulose 5-phosphate = [ThiS sulfur-carrier protein]-C-terminal Gly-Gly + 2-[(2R,5Z)-2-carboxy-4-methylthiazol-5(2H)-ylidene]ethyl phosphate + 2 H2O + H(+). Its pathway is cofactor biosynthesis; thiamine diphosphate biosynthesis. Its function is as follows. Catalyzes the FAD-dependent oxidative deamination of glycine. Is essential for thiamine biosynthesis since the oxidation of glycine catalyzed by ThiO generates the glycine imine intermediate (dehydroglycine) required for the biosynthesis of the thiazole ring of thiamine pyrophosphate. Functionally, catalyzes the rearrangement of 1-deoxy-D-xylulose 5-phosphate (DXP) to produce the thiazole phosphate moiety of thiamine. Sulfur is provided by the thiocarboxylate moiety of the carrier protein ThiS. In vitro, sulfur can be provided by H(2)S. The polypeptide is Bifunctional protein ThiO/ThiG (thiO/thiG) (Trichormus variabilis (strain ATCC 29413 / PCC 7937) (Anabaena variabilis)).